Here is a 104-residue protein sequence, read N- to C-terminus: Major pilu subunit operon regulatory protein PapB (104 aa).

The protein localises to the cytoplasm. May act as both positive and negative regulator of pap transcription. Might positively regulate levels of papI and/or mbf. Its autoregulatory mode of action involves differential binding to separate sites. The sequence is that of Major pilu subunit operon regulatory protein PapB (papB) from Escherichia coli.